Consider the following 644-residue polypeptide: DNA gyrase subunit B (644 aa).

The region spanning 429–543 (CEIFLVEGDS…AGYVYIAQPP (115 aa)) is the Toprim domain. Mg(2+) contacts are provided by Glu-435, Asp-508, and Asp-510.

This sequence belongs to the type II topoisomerase GyrB family. In terms of assembly, heterotetramer, composed of two GyrA and two GyrB chains. In the heterotetramer, GyrA contains the active site tyrosine that forms a transient covalent intermediate with DNA, while GyrB binds cofactors and catalyzes ATP hydrolysis. The cofactor is Mg(2+). Mn(2+) serves as cofactor. Requires Ca(2+) as cofactor.

The protein localises to the cytoplasm. The enzyme catalyses ATP-dependent breakage, passage and rejoining of double-stranded DNA.. In terms of biological role, a type II topoisomerase that negatively supercoils closed circular double-stranded (ds) DNA in an ATP-dependent manner to modulate DNA topology and maintain chromosomes in an underwound state. Negative supercoiling favors strand separation, and DNA replication, transcription, recombination and repair, all of which involve strand separation. Also able to catalyze the interconversion of other topological isomers of dsDNA rings, including catenanes and knotted rings. Type II topoisomerases break and join 2 DNA strands simultaneously in an ATP-dependent manner. This Staphylococcus aureus (strain COL) protein is DNA gyrase subunit B.